The sequence spans 349 residues: Protein-glutamate methylesterase/protein-glutamine glutaminase (349 aa).

One can recognise a Response regulatory domain in the interval R5 to M122. A 4-aspartylphosphate modification is found at D56. The 193-residue stretch at L152–G344 folds into the CheB-type methylesterase domain. Active-site residues include S164, H190, and D286.

The protein belongs to the CheB family. Post-translationally, phosphorylated by CheA. Phosphorylation of the N-terminal regulatory domain activates the methylesterase activity.

It is found in the cytoplasm. It carries out the reaction [protein]-L-glutamate 5-O-methyl ester + H2O = L-glutamyl-[protein] + methanol + H(+). The enzyme catalyses L-glutaminyl-[protein] + H2O = L-glutamyl-[protein] + NH4(+). In terms of biological role, involved in chemotaxis. Part of a chemotaxis signal transduction system that modulates chemotaxis in response to various stimuli. Catalyzes the demethylation of specific methylglutamate residues introduced into the chemoreceptors (methyl-accepting chemotaxis proteins or MCP) by CheR. Also mediates the irreversible deamidation of specific glutamine residues to glutamic acid. The chain is Protein-glutamate methylesterase/protein-glutamine glutaminase from Salmonella typhi.